We begin with the raw amino-acid sequence, 403 residues long: LIM/homeobox protein Lhx1 (403 aa).

LIM zinc-binding domains lie at 4-54 and 63-117; these read CAGC…CKND and CAGC…CKED. Residues 131–147 are compositionally biased toward polar residues; it reads ISVTGSDPSLSPESQDP. Disordered regions lie at residues 131 to 185 and 318 to 366; these read ISVT…PRTT and PAGT…SMHS. Residues 150–166 are compositionally biased toward basic and acidic residues; that stretch reads DDAKDSESANVSDKEAG. A DNA-binding region (homeobox) is located at residues 179–238; it reads RRGPRTTIKAKQLETLKAAFAATPKPTRHIREQLAQETGLNMRVIQVWFQNRRSKERRMK.

Interacts with ldb1 via the tandem LIM domains. Both LIM domains are required for optimal binding and binding relieves the inhibitory effect of the LIM domains and activates lhx1. Binding to ldb1 also prevents degradation of ldb1 by rnf12. The stoichiometry of lhx1 and ldb1 is important for their function and an excess of ldb1 can inhibit lhx1 function. Interacts with the N-terminal region of rnf12 by a homeobox-dependent mechanism. As to expression, exhibits a biphasic expression pattern. Initially localized to the Spemann organizer region of gastrulae, leading to expression in prechordal mesoderm and notochord. In the second phase, expressed in the lateral mesoderm and neural plate, eventually concentrating in the pronephros and the CNS. Expressed in the pronephros primordium by late gastrula (stage 12.5) and becomes restricted to the tips of the tubules and ducts as kidney development progresses. In the CNS, becomes progressively recognizable in anatomically distinct structures during larval development. Within the forebrain, shows almost identical expression to lhx5 in the diencephalon, being expressed in alternating stripes to lhx2 and lhx9. Expressed in the diencephalic pretectum within prosomere 1, hypothalamus, ventral thalamus and zona limitans intrathalamica. In the telencephalon, the expression pattern is distinct from lhx5, being localized in the pallium and subpallium. Also expressed in the ventral territories of midbrain (mesencephalon) and hindbrain (rhombencephalon), being expressed in the mesencephalic tegmentum and hindbrain reticular formation. Also shows intense expression in the cerebellum including Purkinje cells.

It is found in the nucleus. Functionally, involved in the establishment of the body plan via the Spemann organizer during gastrulation. Transcriptional activator required to induce organizer gene expression downstream of siamois. Promotes head formation by binding to 5'-TAAT'-3' elements in the promoters of head organizer genes cer1 and gsc to stimulate expression. Binds as a complex with siamois and mix-A/mix.1 to the cer1 promoter, and with ldb1 and otx2 to the gsc promoter. Also involved in neural induction via the organizer, including a role in notochord formation. Acts synergistically with ldb1 and ssbp in subsequent axis formation. Involved in kidney development, acting synergistically with pax8 to establish the pronephric primordium in late gastrulae/early neurulae and with pax2 during pronephric morphogenesis in tailbud stages. Has a later role in mediating the activity of inhibitors of ventralization. This chain is LIM/homeobox protein Lhx1 (lhx1), found in Xenopus laevis (African clawed frog).